The primary structure comprises 249 residues: 5'-nucleotidase SurE (249 aa).

Positions 8, 9, 39, and 91 each coordinate a divalent metal cation.

It belongs to the SurE nucleotidase family. It depends on a divalent metal cation as a cofactor.

It is found in the cytoplasm. It carries out the reaction a ribonucleoside 5'-phosphate + H2O = a ribonucleoside + phosphate. In terms of biological role, nucleotidase that shows phosphatase activity on nucleoside 5'-monophosphates. The chain is 5'-nucleotidase SurE from Pseudomonas putida (strain ATCC 700007 / DSM 6899 / JCM 31910 / BCRC 17059 / LMG 24140 / F1).